Reading from the N-terminus, the 285-residue chain is Ribosomal protein L11 methyltransferase (285 aa).

4 residues coordinate S-adenosyl-L-methionine: Thr131, Gly154, Asp176, and Asn223.

It belongs to the methyltransferase superfamily. PrmA family.

Its subcellular location is the cytoplasm. It catalyses the reaction L-lysyl-[protein] + 3 S-adenosyl-L-methionine = N(6),N(6),N(6)-trimethyl-L-lysyl-[protein] + 3 S-adenosyl-L-homocysteine + 3 H(+). Its function is as follows. Methylates ribosomal protein L11. This is Ribosomal protein L11 methyltransferase from Brucella abortus (strain S19).